Here is a 428-residue protein sequence, read N- to C-terminus: Proteinase-activated receptor 1 (428 aa).

The N-terminal stretch at 1–21 (MGPQRLLLVAAGLSLCGPLLS) is a signal peptide. The propeptide at 22-41 (SRVPVRQPESEMTDATVNPR) is removed for receptor activation. Topologically, residues 42-105 (SFFLRNPGEN…SGYLTSPWLR (64 aa)) are extracellular. N-linked (GlcNAc...) asparagine glycosylation is found at Asn65 and Asn78. Residues 106–131 (LFIPSVYTFVFVVSLPLNILAIAVFV) form a helical membrane-spanning segment. At 132–140 (LKMKVKKPA) the chain is on the cytoplasmic side. Residues 141–160 (VVYMLHLAMADVLFVSVLPL) form a helical membrane-spanning segment. Topologically, residues 161-179 (KISYYFSGSDWQFGSGMCR) are extracellular. Cys178 and Cys257 are joined by a disulfide. A helical transmembrane segment spans residues 180-201 (FATAAFYCNMYASIMLMTVISI). The Cytoplasmic segment spans residues 202 to 221 (DRFLAVVYPIQSLSWRTLGR). A helical membrane pass occupies residues 222-242 (ANFTCLVIWVMAIMGVVPLLL). Topologically, residues 243-271 (KEQTTRVPGLNITTCHDVLNETLLQGFYS) are extracellular. Asn253 and Asn262 each carry an N-linked (GlcNAc...) asparagine glycan. The chain crosses the membrane as a helical span at residues 272-291 (YYFSAFSAVFFLVPLIISTI). The Cytoplasmic portion of the chain corresponds to 292–314 (CYMSIIRCLSSSSVANRSKKSRA). Residues 315-337 (LFLSAAVFCVFIVCFGPTNVLLI) traverse the membrane as a helical segment. At 338-352 (MHYLLLSDSPATEKA) the chain is on the extracellular side. Residues 353-377 (YFAYLLCVCVSSVSCCIDPLIYYYA) form a helical membrane-spanning segment. The Cytoplasmic portion of the chain corresponds to 378-428 (SSECQRHLYGILCCKESSDPNSYNSTGQLMPSKMDTCSSHLNNSIYKKLLA). Position 421 is a phosphoserine (Ser421).

The protein belongs to the G-protein coupled receptor 1 family. Post-translationally, proteolytic cleavage by thrombin generates a new N-terminus that functions as a tethered ligand. Also proteolytically cleaved by cathepsin CTSG. In terms of processing, phosphorylated in the C-terminal tail; probably mediating desensitization prior to the uncoupling and internalization of the receptor.

Its subcellular location is the cell membrane. High affinity receptor that binds the activated thrombin, leading to calcium release from intracellular stores. The thrombin-activated receptor signaling pathway is mediated through PTX-insensitive G proteins, activation of phospholipase C resulting in the production of 1D-myo-inositol 1,4,5-trisphosphate (InsP3) which binds to InsP3 receptors causing calcium release from the stores. In astrocytes, the calcium released into the cytosol allows the Ca(2+)-dependent release of L-glutamate into the synaptic cleft through BEST1, that targets the neuronal postsynaptic GRIN2A/NMDAR receptor resulting in the synaptic plasticity regulation. May play a role in platelets activation and in vascular development. Mediates up-regulation of pro-inflammatory cytokines, such as MCP-1/CCL2 and IL6, triggered by coagulation factor Xa (F10) in cardiac fibroblasts and umbilical vein endothelial cells. This is Proteinase-activated receptor 1 from Cricetulus longicaudatus (Long-tailed dwarf hamster).